The chain runs to 65 residues: pH-response transcription factor pacC/RIM101 (65 aa).

The C2H2-type 1 zinc-finger motif lies at 16 to 40; sequence LTCQWNSCRTTTVKRDHITSHIRVH. A C2H2-type 2; degenerate zinc finger spans residues 46–65; that stretch reads HKCEFCGKSFKRPQDLKKHV.

It belongs to the pacC/RIM101 family.

The protein resides in the nucleus. In terms of biological role, transcription factor that mediates regulation of both acid- and alkaline-expressed genes in response to ambient pH. At alkaline ambient pH, activates transcription of alkaline-expressed genes (including pac1 itself) and represses transcription of acid-expressed genes. The protein is pH-response transcription factor pacC/RIM101 (pac1) of Colletotrichum gloeosporioides (Anthracnose fungus).